We begin with the raw amino-acid sequence, 430 residues long: Glycine reductase complex component B subunits alpha and beta (430 aa).

Cys242 acts as the Schiff-base intermediate with substrate; via pyruvic acid in catalysis. Cys242 carries the pyruvic acid (Cys) modification.

Heterohexamer of two alpha, two beta and two gamma subunits. Component of the glycine reductase complex, together with components A and C. PB is substrate specific. In terms of processing, the peptide chain is cleaved into beta and alpha chains, and the alpha chain N-terminal cysteine is deaminated and oxidized to form a reactive pyruvoyl group.

The enzyme catalyses acetyl phosphate + [thioredoxin]-disulfide + NH4(+) + H2O = [thioredoxin]-dithiol + glycine + phosphate + H(+). In terms of biological role, in the first step of glycine reductase, the substrate is bound to component PB via a Schiff base intermediate. Then the PB-activated substrate is nucleophilically attacked by the selenol anion of component PA to transform it to a carboxymethylated selenoether and the respective amine. By action of component PC, acetyl phosphate is formed, leaving component PA in its oxidized state. Finally component PA becomes reduced by the thioredoxin system to start a new catalytic cycle of reductive deamination. This is Glycine reductase complex component B subunits alpha and beta (grdE) from Acetoanaerobium sticklandii (strain ATCC 12662 / DSM 519 / JCM 1433 / CCUG 9281 / NCIMB 10654 / HF) (Clostridium sticklandii).